A 121-amino-acid chain; its full sequence is Type II secretion system protein I (121 aa).

Residues 1–6 (MKKQSG) constitute a propeptide, leader sequence. Met7 is subject to N-methylmethionine. The chain crosses the membrane as a helical span at residues 7 to 27 (MTLIEVMVALVVFALAGLAVM).

Belongs to the GSP I family. As to quaternary structure, type II secretion is composed of four main components: the outer membrane complex, the inner membrane complex, the cytoplasmic secretion ATPase and the periplasm-spanning pseudopilus. Interacts with core component PulG. Post-translationally, cleaved by prepilin peptidase. In terms of processing, methylated by prepilin peptidase at the amino group of the N-terminal methionine once the leader sequence is cleaved by prepilin peptidase.

It is found in the cell inner membrane. In terms of biological role, component of the type II secretion system required for the energy-dependent secretion of extracellular factors such as proteases and toxins from the periplasm. Part of the pseudopilus tip complex that is critical for the recognition and binding of secretion substrates. The protein is Type II secretion system protein I (pulI) of Klebsiella pneumoniae.